Here is a 258-residue protein sequence, read N- to C-terminus: Proteasome subunit alpha type-3 (258 aa).

Residues Lys100, Lys199, and Lys231 each participate in a glycyl lysine isopeptide (Lys-Gly) (interchain with G-Cter in ubiquitin) cross-link.

Belongs to the peptidase T1A family. The 26S proteasome consists of a 20S proteasome core and two 19S regulatory subunits. The 20S proteasome core is composed of 28 subunits that are arranged in four stacked rings, resulting in a barrel-shaped structure. The two end rings are each formed by seven alpha subunits, and the two central rings are each formed by seven beta subunits. The catalytic chamber with the active sites is on the inside of the barrel.

The protein localises to the cytoplasm. It is found in the nucleus. The proteasome degrades poly-ubiquitinated proteins in the cytoplasm and in the nucleus. It is essential for the regulated turnover of proteins and for the removal of misfolded proteins. The proteasome is a multicatalytic proteinase complex that is characterized by its ability to cleave peptides with Arg, Phe, Tyr, Leu, and Glu adjacent to the leaving group at neutral or slightly basic pH. It has an ATP-dependent proteolytic activity. This is Proteasome subunit alpha type-3 (PRE9) from Saccharomyces cerevisiae (strain ATCC 204508 / S288c) (Baker's yeast).